The sequence spans 414 residues: 2-epi-5-epi-valiolone synthase (414 aa).

Residues D70, 101–104 (ESAK), 134–138 (GVLTD), 158–159 (TT), K171, K180, and 198–201 (FLAT) contribute to the NAD(+) site. Residue K171 is part of the active site. Residues E213, H284, and H300 each contribute to the Zn(2+) site.

Belongs to the sugar phosphate cyclases superfamily. EEVS family. Requires NAD(+) as cofactor. Zn(2+) serves as cofactor.

It carries out the reaction D-sedoheptulose 7-phosphate = 2-epi-5-epi-valiolone + phosphate. The protein operates within antibiotic biosynthesis. In terms of biological role, catalyzes the cyclization of D-sedoheptulose 7-phosphate to 2-epi-5-epi-valiolone. Involved in validamycin biosynthesis. This chain is 2-epi-5-epi-valiolone synthase, found in Streptomyces hygroscopicus subsp. jinggangensis (strain 5008).